Reading from the N-terminus, the 681-residue chain is T-box brain protein 1 (681 aa).

2 disordered regions span residues 43-83 (TDNL…RSKL) and 108-127 (SQSSQPQSAATAPSAMFPYP). The segment covering 58–68 (GMTNQSDTDNF) has biased composition (polar residues). Over residues 108-122 (SQSSQPQSAATAPSA) the composition is skewed to low complexity. The T-box DNA-binding region spans 213–393 (LWLKFHRHQT…HNPFAKGFRD (181 aa)). Residue T408 is modified to Phosphothreonine. S410 is subject to Phosphoserine. The interval 447-483 (PGAGAGPGPGTDRSVPHTNGLLSPQQAEDPGAPSPQR) is disordered. Polar residues predominate over residues 462–472 (PHTNGLLSPQQ). S594 carries the post-translational modification Phosphoserine. The segment at 597-655 (APAAEDAKPKDLSDSSWIETPSSIKSIDSSDSGIYEQAKRRRISPADTPVSESSSPLKS) is disordered. Over residues 618 to 628 (SSIKSIDSSDS) the composition is skewed to low complexity. S640 carries the phosphoserine modification.

In terms of assembly, homodimer. Part of a complex containing CASK, TBR1 and TSPYL2; may modulate gene expression in response to neuronal synaptic activity. Forms homodimers. Interacts with FOXP2. Interacts with FOXP1. Interacts with BCL11A. Expressed in the developing and adult cortex. Expressed in the olfactory bulbs.

The protein resides in the nucleus. Transcriptional repressor involved in multiple aspects of cortical development, including neuronal migration, laminar and areal identity, and axonal projection. As transcriptional repressor of FEZF2, it blocks the formation of the corticospinal (CS) tract from layer 6 projection neurons, thereby restricting the origin of CS axons specifically to layer 5 neurons. This chain is T-box brain protein 1 (Tbr1), found in Mus musculus (Mouse).